Consider the following 104-residue polypeptide: N(4)-acetylcytidine amidohydrolase (104 aa).

The ASCH domain maps to 7 to 104; that stretch reads TFFTRFEQDI…FWVIAFELVD (98 aa). The Proton acceptor role is filled by K21. T24 acts as the Nucleophile in catalysis. Residue E74 is the Proton donor of the active site.

It belongs to the N(4)-acetylcytidine amidohydrolase family.

The catalysed reaction is N(4)-acetylcytidine + H2O = cytidine + acetate + H(+). It catalyses the reaction N(4)-acetyl-2'-deoxycytidine + H2O = 2'-deoxycytidine + acetate + H(+). It carries out the reaction N(4)-acetylcytosine + H2O = cytosine + acetate + H(+). Its function is as follows. Catalyzes the hydrolysis of N(4)-acetylcytidine (ac4C). The sequence is that of N(4)-acetylcytidine amidohydrolase from Pasteurella multocida (strain Pm70).